Reading from the N-terminus, the 146-residue chain is Transcriptional regulator MraZ (146 aa).

2 SpoVT-AbrB domains span residues 5–50 (SSFH…TFNE) and 77–120 (ACEC…SREQ).

It belongs to the MraZ family. Forms oligomers.

Its subcellular location is the cytoplasm. The protein localises to the nucleoid. This chain is Transcriptional regulator MraZ, found in Desulforapulum autotrophicum (strain ATCC 43914 / DSM 3382 / VKM B-1955 / HRM2) (Desulfobacterium autotrophicum).